Reading from the N-terminus, the 183-residue chain is Putative manganese efflux pump MntP (183 aa).

Helical transmembrane passes span 8-28, 39-59, 68-88, 108-128, 133-153, and 162-182; these read MIALSLMALALGMDAFSVALG, IFYIGLTIGLFHIFMPLVGMA, FGSIATYAGGVLLLWLGGQMI, LFFAFSVSLDSFSVGLSLGIF, MATILLFGLFSTVLTWIGLLV, and GSYSEALGGSILLVFGLKLLF.

This sequence belongs to the MntP (TC 9.B.29) family.

Its subcellular location is the cell membrane. In terms of biological role, probably functions as a manganese efflux pump. This chain is Putative manganese efflux pump MntP, found in Geobacillus thermodenitrificans (strain NG80-2).